Here is a 78-residue protein sequence, read N- to C-terminus: Protein FAM240B (78 aa).

This sequence belongs to the FAM240 family.

The sequence is that of Protein FAM240B from Homo sapiens (Human).